Here is a 404-residue protein sequence, read N- to C-terminus: Glucose-1-phosphate adenylyltransferase (404 aa).

Residues Tyr99, Gly164, 179-180 (EK), and Ser197 each bind alpha-D-glucose 1-phosphate.

This sequence belongs to the bacterial/plant glucose-1-phosphate adenylyltransferase family. Homotetramer.

The catalysed reaction is alpha-D-glucose 1-phosphate + ATP + H(+) = ADP-alpha-D-glucose + diphosphate. It functions in the pathway glycan biosynthesis; glycogen biosynthesis. Involved in the biosynthesis of ADP-glucose, a building block required for the elongation reactions to produce glycogen. Catalyzes the reaction between ATP and alpha-D-glucose 1-phosphate (G1P) to produce pyrophosphate and ADP-Glc. This chain is Glucose-1-phosphate adenylyltransferase, found in Rhodococcus erythropolis (strain PR4 / NBRC 100887).